We begin with the raw amino-acid sequence, 855 residues long: Valine--tRNA ligase (855 aa).

The 'HIGH' region signature appears at 42–52 (PTISGKLHIGH). A 'KMSKS' region motif is present at residues 574–578 (KMSKS). K577 serves as a coordination point for ATP.

It belongs to the class-I aminoacyl-tRNA synthetase family. ValS type 2 subfamily. In terms of assembly, monomer.

Its subcellular location is the cytoplasm. The catalysed reaction is tRNA(Val) + L-valine + ATP = L-valyl-tRNA(Val) + AMP + diphosphate. Functionally, catalyzes the attachment of valine to tRNA(Val). As ValRS can inadvertently accommodate and process structurally similar amino acids such as threonine, to avoid such errors, it has a 'posttransfer' editing activity that hydrolyzes mischarged Thr-tRNA(Val) in a tRNA-dependent manner. The chain is Valine--tRNA ligase from Wolbachia sp. subsp. Brugia malayi (strain TRS).